The chain runs to 443 residues: Protein king tubby (443 aa).

2 disordered regions span residues 57–80 (TNGS…NNMR) and 98–191 (HELE…EGDV). The span at 68–80 (AMNTSRNHSNNMR) shows a compositional bias: polar residues. The span at 113 to 128 (QHQQSASHSANSTQSQ) shows a compositional bias: low complexity. At serine 136 the chain carries Phosphoserine. The span at 177–186 (NGTGNGTGGE) shows a compositional bias: gly residues.

It belongs to the TUB family.

Its subcellular location is the cytoplasm. It localises to the nucleus. It is found in the cell projection. The protein resides in the cilium membrane. The protein localises to the rhabdomere. This chain is Protein king tubby, found in Drosophila simulans (Fruit fly).